The chain runs to 342 residues: Anthranilate phosphoribosyltransferase (342 aa).

Residues Gly-79, 82–83 (GD), Thr-87, 89–92 (NIST), 107–115 (KHCNQRISS), and Ser-119 contribute to the 5-phospho-alpha-D-ribose 1-diphosphate site. Gly-79 is an anthranilate binding site. Mg(2+) is bound at residue Ser-91. An anthranilate-binding site is contributed by Asn-110. An anthranilate-binding site is contributed by Arg-165. Mg(2+) is bound by residues Asp-223 and Glu-224.

The protein belongs to the anthranilate phosphoribosyltransferase family. As to quaternary structure, homodimer. The cofactor is Mg(2+).

It carries out the reaction N-(5-phospho-beta-D-ribosyl)anthranilate + diphosphate = 5-phospho-alpha-D-ribose 1-diphosphate + anthranilate. Its pathway is amino-acid biosynthesis; L-tryptophan biosynthesis; L-tryptophan from chorismate: step 2/5. Its function is as follows. Catalyzes the transfer of the phosphoribosyl group of 5-phosphorylribose-1-pyrophosphate (PRPP) to anthranilate to yield N-(5'-phosphoribosyl)-anthranilate (PRA). The polypeptide is Anthranilate phosphoribosyltransferase (Buchnera aphidicola subsp. Acyrthosiphon pisum (strain 5A)).